We begin with the raw amino-acid sequence, 368 residues long: DNA replication and repair protein RecF (368 aa).

30-37 (GNNAQGKT) is a binding site for ATP.

Belongs to the RecF family.

The protein resides in the cytoplasm. The RecF protein is involved in DNA metabolism; it is required for DNA replication and normal SOS inducibility. RecF binds preferentially to single-stranded, linear DNA. It also seems to bind ATP. The chain is DNA replication and repair protein RecF from Streptococcus pyogenes serotype M4 (strain MGAS10750).